Reading from the N-terminus, the 181-residue chain is Ribosome maturation factor RimP (181 aa).

The protein belongs to the RimP family.

Its subcellular location is the cytoplasm. Its function is as follows. Required for maturation of 30S ribosomal subunits. The chain is Ribosome maturation factor RimP from Sphingopyxis alaskensis (strain DSM 13593 / LMG 18877 / RB2256) (Sphingomonas alaskensis).